The sequence spans 370 residues: tRNA-specific 2-thiouridylase MnmA (370 aa).

ATP-binding positions include 24–31 (AMSGGVDS) and Leu50. Cys118 functions as the Nucleophile in the catalytic mechanism. The cysteines at positions 118 and 214 are disulfide-linked. Position 142 (Gly142) interacts with ATP. The interval 164-166 (KDQ) is interaction with tRNA. Residue Cys214 is the Cysteine persulfide intermediate of the active site.

Belongs to the MnmA/TRMU family.

It is found in the cytoplasm. It catalyses the reaction S-sulfanyl-L-cysteinyl-[protein] + uridine(34) in tRNA + AH2 + ATP = 2-thiouridine(34) in tRNA + L-cysteinyl-[protein] + A + AMP + diphosphate + H(+). In terms of biological role, catalyzes the 2-thiolation of uridine at the wobble position (U34) of tRNA, leading to the formation of s(2)U34. This chain is tRNA-specific 2-thiouridylase MnmA, found in Ehrlichia ruminantium (strain Gardel).